The chain runs to 728 residues: Catalase B (728 aa).

Positions 1 to 15 (MRLTFIPSLIGVANA) are cleaved as a signal peptide. Positions 16–27 (VCPYMTGELNRR) are excised as a propeptide. Residue histidine 102 is part of the active site. An N-linked (GlcNAc...) asparagine glycan is attached at asparagine 120. Asparagine 175 is an active-site residue. Position 389 (tyrosine 389) interacts with heme. 2 N-linked (GlcNAc...) asparagine glycosylation sites follow: asparagine 448 and asparagine 551.

This sequence belongs to the catalase family. As to quaternary structure, homotetramer. Heme is required as a cofactor. Post-translationally, N-glycosylated.

Its subcellular location is the secreted. The enzyme catalyses 2 H2O2 = O2 + 2 H2O. Its function is as follows. Occurs in almost all aerobically respiring organisms and serves to protect cells from the toxic effects of hydrogen peroxide. This is Catalase B (catB) from Aspergillus fumigatus (strain ATCC MYA-4609 / CBS 101355 / FGSC A1100 / Af293) (Neosartorya fumigata).